The sequence spans 255 residues: Hydroxyacylglutathione hydrolase (255 aa).

His56, His58, Asp60, His61, His114, Asp133, and His171 together coordinate Zn(2+).

It belongs to the metallo-beta-lactamase superfamily. Glyoxalase II family. In terms of assembly, monomer. Zn(2+) is required as a cofactor.

It catalyses the reaction an S-(2-hydroxyacyl)glutathione + H2O = a 2-hydroxy carboxylate + glutathione + H(+). Its pathway is secondary metabolite metabolism; methylglyoxal degradation; (R)-lactate from methylglyoxal: step 2/2. Its function is as follows. Thiolesterase that catalyzes the hydrolysis of S-D-lactoyl-glutathione to form glutathione and D-lactic acid. The sequence is that of Hydroxyacylglutathione hydrolase from Rhodopseudomonas palustris (strain BisB18).